The sequence spans 1151 residues: Importin beta (1151 aa).

HEAT repeat units lie at residues 1 to 36, 37 to 82, 83 to 132, 133 to 175, 176 to 222, 223 to 269, 270 to 316, 317 to 377, 378 to 416, 417 to 453, 454 to 495, 496 to 540, 541 to 593, 594 to 642, 643 to 704, 705 to 756, 757 to 811, 812 to 880, 881 to 932, 933 to 978, 979 to 1027, 1028 to 1074, 1075 to 1120, and 1121 to 1151; these read MDLA…KQEE, PASY…GNGN, PECV…VAQF, PEFF…TKIG, GKAI…DSVI, PNSV…AVLK, PMVK…RAKK, AISE…KVIF, PLIK…LVTK, EDIV…EDYA, PTFQ…HLKK, AETY…LKND, FADM…AGTL, PQLF…PETF, PKYM…MRKT, PAAF…TVAS, PPAV…SYTE, TVNK…ALGD, LSLD…KYLS, PANS…YEGD, PGLA…AQAF, PTEL…ARND, PNFM…VLTQ, and IAGH…SVRQ.

Belongs to the importin beta family.

The protein localises to the nucleus intermembrane space. The protein resides in the cytoplasm. It localises to the nucleus. In terms of biological role, functions in nuclear protein import as nuclear transport receptor. Involved in encystation process. Constitutive expression enhances cyst production and increases transcription of endogenous genes involved in encystation. Level of mRNA of the transcriptional factor myb1-like protein increases in early stages of the encystation process followed by increased mRNAs of the cyst wall proteins cwp1-3. The chain is Importin beta from Giardia intestinalis (strain ATCC 50803 / WB clone C6) (Giardia lamblia).